Here is a 456-residue protein sequence, read N- to C-terminus: Equilibrative nucleoside transporter 1 (456 aa).

The Cytoplasmic portion of the chain corresponds to threonine 2 to lysine 12. A helical transmembrane segment spans residues alanine 13–tryptophan 29. Residues asparagine 30–asparagine 82 are Extracellular-facing. Asparagine 48 is a glycosylation site (N-linked (GlcNAc...) asparagine). The chain crosses the membrane as a helical span at residues valine 83 to proline 107. Topologically, residues glutamine 108–arginine 111 are cytoplasmic. A helical transmembrane segment spans residues isoleucine 112 to valine 130. The Extracellular segment spans residues lysine 131 to proline 138. The chain crosses the membrane as a helical span at residues phenylalanine 139–leucine 157. Topologically, residues glutamine 158–alanine 174 are cytoplasmic. Residues proline 175–serine 199 traverse the membrane as a helical segment. Residues glutamate 200 to phenylalanine 206 lie on the Extracellular side of the membrane. Residues glycine 207–proline 227 traverse the membrane as a helical segment. Residues arginine 228–valine 291 are Cytoplasmic-facing. Phosphoserine occurs at positions 254, 269, and 273. A compositionally biased stretch (basic and acidic residues) spans serine 254–serine 266. The disordered stretch occupies residues serine 254 to threonine 276. Residues leucine 292–threonine 311 form a helical membrane-spanning segment. At valine 312–threonine 323 the chain is on the extracellular side. The chain crosses the membrane as a helical span at residues tryptophan 324–tryptophan 342. Topologically, residues leucine 343 to arginine 359 are cytoplasmic. Residues tryptophan 360–cysteine 378 form a helical membrane-spanning segment. Over asparagine 379 to aspartate 393 the chain is Extracellular. Residues alanine 394–leucine 413 traverse the membrane as a helical segment. At cysteine 414–glycine 431 the chain is on the cytoplasmic side. Residues alanine 432–phenylalanine 452 traverse the membrane as a helical segment. Topologically, residues arginine 453 to valine 456 are extracellular.

This sequence belongs to the SLC29A/ENT transporter (TC 2.A.57) family. In terms of assembly, identified in a complex with STOM. In terms of processing, glycosylated. Expressed in testis at the blood-testis barrier (at protein level). Detected in erythrocytes (at protein level). Expressed at relatively high levels in cerebral cortex, particularly the frontal and parietal lobes, and the thalamus and basal ganglia (at protein level). In the midbrain expressed at moderate levels, whereas in the other areas of the brainstem, namely medulla and pons, cerebellum and the hippocampus expressed at lower amounts when compared to the other brain regions (at protein level). Expressed in Langerhans cells and lymphocytes in the pancreas (at protein level). Expressed in kidney, in polarized renal epithelial cells. Expressed in adipose tissues. Expressed in placenta. Expressed in small intestine.

The protein resides in the basolateral cell membrane. It is found in the apical cell membrane. The protein localises to the cell membrane. It carries out the reaction adenosine(in) = adenosine(out). It catalyses the reaction guanosine(in) = guanosine(out). The catalysed reaction is inosine(in) = inosine(out). The enzyme catalyses uridine(out) = uridine(in). It carries out the reaction thymidine(in) = thymidine(out). It catalyses the reaction cytidine(in) = cytidine(out). The catalysed reaction is adenine(out) = adenine(in). The enzyme catalyses guanine(out) = guanine(in). It carries out the reaction thymine(out) = thymine(in). It catalyses the reaction uracil(in) = uracil(out). The catalysed reaction is hypoxanthine(out) = hypoxanthine(in). Its activity is regulated as follows. Transporter activity is sensitive to low concentrations of the inhibitor nitrobenzylmercaptopurine riboside (NBMPR). Inhibited by dilazep. Inhibited by dipyridamole. Inhibited by hypoxanthine. Inhibited by azidothymidine (AZT). Inhibited by dideoxycytidine (ddC). Inhibited by dideoxyinosine (ddI). Inhibited by draflazine. Inhibited by soluflazine. Inhibited by cladribine. Inhibited by capecitabine. Inhibited by clofarabine. Inhibited by ribavirin. Modestly inhibited by acyclovir. Modestly inhibited by 5-fluorouracil. Uniporter involved in the facilitative transport of nucleosides and nucleobases, and contributes to maintaining their cellular homeostasis. Functions as a Na(+)-independent transporter. Involved in the transport of nucleosides such as adenosine, guanosine, inosine, uridine, thymidine and cytidine. Also transports purine nucleobases (hypoxanthine, adenine, guanine) and pyrimidine nucleobases (thymine, uracil). Mediates basolateral nucleoside uptake into Sertoli cells, thereby regulating the transport of nucleosides in testis across the blood-testis barrier. Regulates inosine levels in brown adipocytes tissues (BAT) and extracellular inosine levels, which controls BAT-dependent energy expenditure. The sequence is that of Equilibrative nucleoside transporter 1 from Homo sapiens (Human).